The primary structure comprises 268 residues: Holocytochrome c-type synthase (268 aa).

Low complexity predominate over residues 1-22 (MGLSPSAPAVAVQASNASASPP). The interval 1–25 (MGLSPSAPAVAVQASNASASPPSGC) is disordered. Residue Gly-2 is the site of N-myristoyl glycine attachment. HRM repeat units lie at residues 24-29 (GCPMHE) and 34-39 (GCPVNT).

Belongs to the cytochrome c-type heme lyase family.

The protein localises to the mitochondrion inner membrane. It localises to the membrane. It carries out the reaction holo-[cytochrome c] = apo-[cytochrome c] + heme b. In terms of biological role, lyase that catalyzes the covalent linking of the heme group to the cytochrome C apoprotein to produce the mature functional cytochrome. This chain is Holocytochrome c-type synthase, found in Homo sapiens (Human).